An 816-amino-acid chain; its full sequence is MGSNLPAQPNLRLTIIAADGLYKRDVFRFPDPFAVATVGGEQTHTTSVIKKTLNPYWNEMFDLRVNEDSILAIQIFDQKKFKKKDQGFLGVINVRIGDVIDLQMGGDEMLTRDLKKSNDNLVVHGKLIINLSTNLSTPNTNQANGLHRSHVQSSTSSGLVPQVAPSSSHPAASGAAPVDPSASNPSLNPQRVPSTTRPSSTAAPASAAGAAASNTHGSRTNLSSFEDSQGRLPAGWERREDNLGRTYYVDHNTRTTTWTRPSSNYNEHAQRSQREANMQLERRAHQSRMLPEDRTGANSPNLPESSQQAHTPPAGGSANAVSMMATGATTAGTGELPPGWEQRTTPEGRPYFVDHNTRTTTWVDPRRQQYIRMYGQNANGTNTTIQQQPVSQLGPLPSGWEMRLTNTARVYFVDHNTKTTTWDDPRLPSSLDQGVPQYKRDFRRKLIYFRSQPALRIMSGQCHVKVRRNNIFEDSYAEIMRQSASDLKKRLMIKFDGEDGLDYGGLSREFFFLLSHEMFNPFYCLFEYSAHDNYTLQINPHSGVNPEHLNYFKFIGRVVGLAIFHRRFLDSFFIGAFYKMMLRKKVSLQDMEGVDEDLHRNLTWTLDNDIEGVLELTFSVDDEKFGERRTIDLKPGGRDIPVTNENKAEYVELVTEWKIVKRVEEQFNAFMSGFNELIPADLVNVFDERELELLIGGIADIDVDDWKKHTDYRGYQESDEVIQNFWKVVRSWDAEQKSRLLQFTTGTSRIPVNGFKDLQGSDGPRRFTIEKSGDPAALPKSHTCFNRLDLPPYKSYETLEHKMSIAVEETLGFGQE.

In terms of domain architecture, C2 spans 1–112 (MGSNLPAQPN…QMGGDEMLTR (112 aa)). 2 disordered regions span residues 134-238 (NLST…GWER) and 254-354 (RTTT…YFVD). Residues 160–178 (VPQVAPSSSHPAASGAAPV) show a composition bias toward low complexity. Polar residues predominate over residues 181 to 192 (SASNPSLNPQRV). Residues 193-213 (PSTTRPSSTAAPASAAGAAAS) show a composition bias toward low complexity. Composition is skewed to polar residues over residues 214–227 (NTHG…SFED) and 254–267 (RTTT…NYNE). One can recognise a WW 1 domain in the interval 230-263 (GRLPAGWERREDNLGRTYYVDHNTRTTTWTRPSS). Over residues 268-295 (HAQRSQREANMQLERRAHQSRMLPEDRT) the composition is skewed to basic and acidic residues. The segment covering 296–310 (GANSPNLPESSQQAH) has biased composition (polar residues). Over residues 325–334 (ATGATTAGTG) the composition is skewed to low complexity. 2 WW domains span residues 334 to 367 (GELP…DPRR) and 394 to 427 (GPLP…DPRL). The HECT domain maps to 483 to 816 (SASDLKKRLM…VEETLGFGQE (334 aa)). Cys784 acts as the Glycyl thioester intermediate in catalysis.

This sequence belongs to the RSP5/NEDD4 family. In terms of assembly, interacts with creD.

Its subcellular location is the cytoplasm. It catalyses the reaction S-ubiquitinyl-[E2 ubiquitin-conjugating enzyme]-L-cysteine + [acceptor protein]-L-lysine = [E2 ubiquitin-conjugating enzyme]-L-cysteine + N(6)-ubiquitinyl-[acceptor protein]-L-lysine.. The protein operates within protein modification; protein ubiquitination. E3 ubiquitin-protein ligase which accepts ubiquitin from an E2 ubiquitin-conjugating enzyme in the form of a thioester and then directly transfers the ubiquitin to targeted substrates. Probably involved in the regulatory network controlling carbon source utilization. In Neosartorya fischeri (strain ATCC 1020 / DSM 3700 / CBS 544.65 / FGSC A1164 / JCM 1740 / NRRL 181 / WB 181) (Aspergillus fischerianus), this protein is Probable E3 ubiquitin-protein ligase hulA (hulA).